The following is a 348-amino-acid chain: Probable dual-specificity RNA methyltransferase RlmN (348 aa).

Catalysis depends on Glu-92, which acts as the Proton acceptor. The 234-residue stretch at 98–331 folds into the Radical SAM core domain; the sequence is HPDRVTACIS…NEIRREKGTD (234 aa). A disulfide bond links Cys-105 and Cys-336. 3 residues coordinate [4Fe-4S] cluster: Cys-112, Cys-116, and Cys-119. Residues 159–160, Ser-191, 214–216, and Asn-290 contribute to the S-adenosyl-L-methionine site; these read GE and SLH. Cys-336 (S-methylcysteine intermediate) is an active-site residue.

The protein belongs to the radical SAM superfamily. RlmN family. [4Fe-4S] cluster is required as a cofactor.

It localises to the cytoplasm. The enzyme catalyses adenosine(2503) in 23S rRNA + 2 reduced [2Fe-2S]-[ferredoxin] + 2 S-adenosyl-L-methionine = 2-methyladenosine(2503) in 23S rRNA + 5'-deoxyadenosine + L-methionine + 2 oxidized [2Fe-2S]-[ferredoxin] + S-adenosyl-L-homocysteine. It carries out the reaction adenosine(37) in tRNA + 2 reduced [2Fe-2S]-[ferredoxin] + 2 S-adenosyl-L-methionine = 2-methyladenosine(37) in tRNA + 5'-deoxyadenosine + L-methionine + 2 oxidized [2Fe-2S]-[ferredoxin] + S-adenosyl-L-homocysteine. In terms of biological role, specifically methylates position 2 of adenine 2503 in 23S rRNA and position 2 of adenine 37 in tRNAs. This is Probable dual-specificity RNA methyltransferase RlmN from Fervidobacterium nodosum (strain ATCC 35602 / DSM 5306 / Rt17-B1).